We begin with the raw amino-acid sequence, 257 residues long: Small ribosomal subunit protein uS4c (257 aa).

2 S4 RNA-binding domains span residues Met-110–Asn-170 and Lys-189–Leu-255.

This sequence belongs to the universal ribosomal protein uS4 family. In terms of assembly, part of the 30S ribosomal subunit. Contacts protein S5. The interaction surface between S4 and S5 is involved in control of translational fidelity.

The protein resides in the plastid. Its subcellular location is the chloroplast. Its function is as follows. One of the primary rRNA binding proteins, it binds directly to 16S rRNA where it nucleates assembly of the body of the 30S subunit. In terms of biological role, with S5 and S12 plays an important role in translational accuracy. This chain is Small ribosomal subunit protein uS4c (rps4), found in Chlamydomonas reinhardtii (Chlamydomonas smithii).